The sequence spans 93 residues: UPF0358 protein BBR47_22520 (93 aa).

Belongs to the UPF0358 family.

This chain is UPF0358 protein BBR47_22520, found in Brevibacillus brevis (strain 47 / JCM 6285 / NBRC 100599).